The primary structure comprises 452 residues: Putative tripartite motif-containing protein 49B (452 aa).

An RING-type zinc finger spans residues 15 to 56 (CPICMNYFIDPVTIDCGHSFCRPCFYLNWKDSPFLVQCSECT). The B box-type zinc-finger motif lies at 88 to 129 (SEEQMCGTHRETKKMFCEVDRSLLCLLCSSSQEHRDHRHCPI). Zn(2+)-binding residues include Cys-93, His-96, Cys-115, and His-121. The B30.2/SPRY domain occupies 269-452 (ELSAGPITGL…LRPIFCCIHF (184 aa)).

The protein belongs to the TRIM/RBCC family.

The sequence is that of Putative tripartite motif-containing protein 49B (TRIM49B) from Homo sapiens (Human).